A 569-amino-acid polypeptide reads, in one-letter code: Mitochondrial import receptor subunit tomm-70 (569 aa).

The Mitochondrial intermembrane portion of the chain corresponds to Met-1–Lys-12. Residues Lys-13–Tyr-32 traverse the membrane as a helical segment. Residues Lys-33–Tyr-569 are Cytoplasmic-facing. 4 TPR repeats span residues Leu-44–Asn-77, Thr-119–Leu-152, Asp-221–Met-254, and Leu-510–Arg-544.

The protein belongs to the Tom70 family. As to quaternary structure, forms part of the preprotein translocase complex of the outer mitochondrial membrane (TOM complex). In terms of tissue distribution, expressed in body wall muscle cells, the pharynx and structures in the tail.

It localises to the mitochondrion outer membrane. Its function is as follows. Receptor that accelerates the import of all mitochondrial precursor proteins. The chain is Mitochondrial import receptor subunit tomm-70 from Caenorhabditis elegans.